A 473-amino-acid chain; its full sequence is Reticulon-4 receptor (473 aa).

An N-terminal signal peptide occupies residues 1–26 (MKRASSGGSRLLAWVLWLQAWRVATP). Disulfide bonds link C27/C33 and C31/C43. An LRRNT domain is found at 27–57 (CPGACVCYNEPKVTTSCPQQGLQAVPTGIPA). 9 LRR repeats span residues 56–79 (PASSQRIFLHGNRISYVPAASFQS), 80–103 (CRNLTILWLHSNALAGIDAAAFTG), 105–128 (TLLEQLDLSDNAQLRVVDPTTFRG), 129–152 (LGHLHTLHLDRCGLQELGPGLFRG), 153–176 (LAALQYLYLQDNNLQALPDNTFRD), 178–200 (GNLTHLFLHGNRIPSVPEHAFRG), 202–224 (HSLDRLLLHQNHVARVHPHAFRD), 225–248 (LGRLMTLYLFANNLSMLPAEVLVP), and 250–273 (RSLQYLRLNDNPWVCDCRARPLWA). N82 carries an N-linked (GlcNAc...) asparagine glycan. One can recognise an LRRCT domain in the interval 260–310 (NPWVCDCRARPLWAWLQKFRGSSSEVPCNLPQRLAGRDLKRLAASDLEGCA). Cystine bridges form between C264-C287, C266-C335, and C309-C336. The segment at 346-446 (VLEPGRPASA…GSSGTGDAEG (101 aa)) is disordered. Residue N372 is glycosylated (N-linked (GlcNAc...) asparagine). Residues 413-429 (PRRRPGCSRKNRTRSHC) are compositionally biased toward basic residues. The span at 434 to 445 (AGSGSSGTGDAE) shows a compositional bias: gly residues. S447 carries the GPI-anchor amidated serine lipid modification. The propeptide at 448 to 473 (GALPALACSLAPLGLALVLWTVLGPC) is removed in mature form.

This sequence belongs to the Nogo receptor family. In terms of assembly, homodimer. Interacts with MAG. Interacts with RTN4 and OMG. Interacts with LINGO1 and NGFR. Interacts with KIAA0319L. Interacts with OLFM1; this inhibits interaction with LINGO1 and NGFR. Post-translationally, N-glycosylated. O-glycosylated. Contains terminal sialic acid groups on its glycan chains. In terms of tissue distribution, detected in embryonic cerebellum, in spinal cord motor neurons and in dorsal root ganglia. Detected in adult brain, in neocortex, hippocampus, striatum, thalamus and dorsal root ganglion neurons (at protein level).

The protein localises to the cell membrane. The protein resides in the membrane raft. Its subcellular location is the cell projection. It is found in the dendrite. It localises to the perikaryon. The protein localises to the axon. Functionally, receptor for RTN4, OMG and MAG. Functions as a receptor for the sialylated gangliosides GT1b and GM1. Besides, functions as a receptor for chondroitin sulfate proteoglycans. Can also bind heparin. Intracellular signaling cascades are triggered via the coreceptor NGFR. Signaling mediates activation of Rho and downstream reorganization of the actin cytoskeleton. Mediates axonal growth inhibition. May play a role in regulating axon regeneration and neuronal plasticity in the adult central nervous system. Plays a role in postnatal brain development. Required for normal axon migration across the brain midline and normal formation of the corpus callosum. Protects motoneurons against apoptosis; protection against apoptosis is probably mediated via interaction with MAG. Acts in conjunction with RTN4 and LINGO1 in regulating neuronal precursor cell motility during cortical development. Like other family members, plays a role in restricting the number dendritic spines and the number of synapses that are formed during brain development. The sequence is that of Reticulon-4 receptor (Rtn4r) from Rattus norvegicus (Rat).